Consider the following 56-residue polypeptide: MKWKMKKCPKDNTYTFKDICPVCGSKTMIPHPSRFSPEDKYVKYRIELKKGVKLNC.

Belongs to the NOP10 family.

Its function is as follows. Involved in ribosome biogenesis; more specifically in 18S rRNA pseudouridylation and in cleavage of pre-rRNA. The polypeptide is Ribosome biogenesis protein Nop10 (Saccharolobus islandicus (strain Y.N.15.51 / Yellowstone #2) (Sulfolobus islandicus)).